The sequence spans 1207 residues: Ras GTPase-activating protein gap-2 (1207 aa).

Disordered stretches follow at residues 1–29 (MKVI…SCTK) and 221–316 (RMSS…GSLR). The PH domain occupies 40-383 (PPICHGWLIV…WMENLRKTMN (344 aa)). Residues 223-236 (SSSSHNLSTRLSGS) show a composition bias toward low complexity. Composition is skewed to polar residues over residues 237 to 247 (TQNLNQPTNAY) and 286 to 297 (ASNTPSRDSSLY). One can recognise a C2 domain in the interval 374–490 (WMENLRKTMN…SSRSPVERWY (117 aa)). Over residues 495 to 504 (SHSDSGTSRI) the composition is skewed to polar residues. The disordered stretch occupies residues 495 to 516 (SHSDSGTSRIASALGGKSSSQE). The Ras-GAP domain occupies 579–789 (NLAKEFLCDL…HRMKDFLLRI (211 aa)). Disordered stretches follow at residues 856 to 903 (GVFH…LGRS), 923 to 1013 (FQTP…SSSS), 1086 to 1107 (ATGG…RASR), and 1163 to 1207 (LKSK…VVPN). Polar residues-rich tracts occupy residues 862-876 (MVQQ…SPQQ) and 891-903 (TPPT…LGRS). Positions 939–953 (TGTSSSRTSDKTTSS) are enriched in low complexity. Residues 955-972 (EIRDDTDSDFELREDRGR) show a composition bias toward basic and acidic residues. The span at 985–1013 (ASPSSSQQASSGYLSNNPSRSSYSNSSSS) shows a compositional bias: low complexity. Positions 1181-1207 (SGASEDSYDSLSSLDRPSRQSLVVVPN) are enriched in low complexity.

As to expression, mainly expressed in gonads and vulval cells. Isoform c in expressed in pharyngeal epithelial cells and several rectal/blast cells in the tail region. Isoform f is weakly expressed in four cells symmetrically located in the vulval region. Isoform g is strongly expressed in the pharyngeal muscle cells m6 in addition to several cells in the tail region.

The protein resides in the cytoplasm. In terms of biological role, GTPase-activating protein, which acts as a negative regulator for the member of the Ras family let-60. Probably decreases the signaling activity of Ras by stimulating its intrinsic GTPase activity, thereby lowering the levels of GTP-bound, active Ras. The different isoforms may play a distinct role in specific tissues. The protein is Ras GTPase-activating protein gap-2 (gap-2) of Caenorhabditis elegans.